Reading from the N-terminus, the 618-residue chain is MSQLANPELMKVVILLASSVTIVPLFKRLGLGSVLGYLVAGCLIGPSVFGIVQEPTAVVHLAELGVVMFLFIIGLEMYPERLWAMRKAIFGRGLLQVGLCGCLLTFSGIYLLGLTKEVSFIAGMGFTLSSTAIVMQSLEERGLTSTSKGQRVISTLIFEDIAIVPLLASVAFLAPHSKEATPHTDWVSIGIALSAVVGLIVTGKWLMNPLFRLISKARIREMMTAGALLVVLGAALAMEIGGLSMAMGAFVAGVMMSESAFRHQLEADIEPFRGLLLGLFFMGVGMSLDLHLVFNHWILLLGIVFLYILGKASAVYIIARITRLDHREAIGRMSLMAHGGEFAFVLFSAAATAEVISNEEQATFTAAVIISMLFSPIIAQIARKLIQRTEPKHLDQLDENDLDTIVDLEDNVLVIGFGRFSQIVCQTLLIRGISVSVIDRNIENIRAAAKFGFKVYYGDGIRLDVLRAAGIEKAKCVVLGINDTQRIEHIVSQMKEAYPNLPILTRTYDRKTTVSLIKQDVDFIVRETFESAITLSRATLMKLGIDKIEAEEIIKEVRTLDQERLNEEVLHGFSNEIVKKYWTPRPFIKPHLDTKALNKETEEILSEKIEEEISNDHS.

A run of 12 helical transmembrane segments spans residues 6–26 (NPELMKVVILLASSVTIVPLF), 32–52 (GSVLGYLVAGCLIGPSVFGIV), 55–75 (PTAVVHLAELGVVMFLFIIGL), 94–114 (LLQVGLCGCLLTFSGIYLLGL), 118–138 (VSFIAGMGFTLSSTAIVMQSL), 152–172 (VISTLIFEDIAIVPLLASVAF), 186–206 (WVSIGIALSAVVGLIVTGKWL), 227–247 (ALLVVLGAALAMEIGGLSMAM), 274–294 (GLLLGLFFMGVGMSLDLHLVF), 298–318 (ILLLGIVFLYILGKASAVYII), 336–356 (MAHGGEFAFVLFSAAATAEVI), and 362–382 (ATFTAAVIISMLFSPIIAQIA). The RCK N-terminal domain maps to 409–525 (EDNVLVIGFG…LIKQDVDFIV (117 aa)).

Belongs to the monovalent cation:proton antiporter 2 (CPA2) transporter (TC 2.A.37) family.

It is found in the cell inner membrane. In terms of biological role, transport system that facilitate potassium-efflux, possibly by potassium-proton antiport. In Haemophilus influenzae (strain ATCC 51907 / DSM 11121 / KW20 / Rd), this protein is Glutathione-regulated potassium-efflux system protein (kefBC).